A 365-amino-acid chain; its full sequence is MSDGAALTEDAVGDTVLSIDAMGGDLGPASVVSGLAKASAKNPTLRFIVHGDKPELERLIAKKRGLADVCELRHTKDVVTMDAKPSHVMRNGKDTSMWSTIEAVRDGDASVAVSCGNTGALMAISMIRLRKLEGVNRPAIACLWPSRNPSGFNVMLDVGADIRADAEDLLQYALMGASYARNGLDLSRPRIGLLNVGTEEHKGRAELKVAAELIDRAAPAADFEFVGFVEGSDLPSDRVDVIVTDGFTGNVALKTGEGTARLIRELLEQAFKKTPFSRVAALLAFTSLRRLSKRIDPRRVNGGVFLGLNGTVVKSHGSADPTGVAAAINLAAQLSATGFHKRLAARIAQAEAAASVAIQKEGSSE.

This sequence belongs to the PlsX family. Homodimer. Probably interacts with PlsY.

It localises to the cytoplasm. It catalyses the reaction a fatty acyl-[ACP] + phosphate = an acyl phosphate + holo-[ACP]. The protein operates within lipid metabolism; phospholipid metabolism. Catalyzes the reversible formation of acyl-phosphate (acyl-PO(4)) from acyl-[acyl-carrier-protein] (acyl-ACP). This enzyme utilizes acyl-ACP as fatty acyl donor, but not acyl-CoA. This chain is Phosphate acyltransferase, found in Jannaschia sp. (strain CCS1).